Here is a 116-residue protein sequence, read N- to C-terminus: Vesicle-associated membrane protein 2 (116 aa).

Positions Met-1–Gln-33 are disordered. Ser-2 bears the N-acetylserine mark. Over Ser-2–Lys-94 the chain is Cytoplasmic. Residues Arg-31–Lys-91 enclose the v-SNARE coiled-coil homology domain. The required for interaction with SEPT8 stretch occupies residues Asn-92–Ser-116. A helical; Anchor for type IV membrane protein transmembrane segment spans residues Met-95 to Phe-114. Residues Ser-115–Ser-116 lie on the Vesicular side of the membrane.

This sequence belongs to the synaptobrevin family. As to quaternary structure, part of the SNARE core complex containing SNAP25, VAMP2 and STX1A; this complex constitutes the basic catalytic machinery of the complex neurotransmitter release apparatus. Recruited to the SNARE complex following binding of the SNARE complex component STX1A to STXBP1. This complex binds to CPLX1. Interacts with POPDC1 and STX4. Interacts with VAPA and VAPB. Interacts with WDFY2, PRKCZ and PRKCI. Forms a complex with WDFY2 and PRKCZ. Interacts (via N-terminus) with KCNB1 (via N-terminus and C-terminus); stimulates the channel inactivation rate of KCNB1. Interacts with SEPT8; the interaction inhibits interaction of VAMP2 with SYP. Interacts with SYP; the interaction is inhibited by interaction with SEPT8. Interacts with PICALM. Interacts with alpha-synuclein/SNCA. Interacts with STX3. In terms of processing, phosphorylated by PRKCZ in vitro and this phosphorylation is increased in the presence of WDFY2.

It is found in the cytoplasmic vesicle. The protein resides in the secretory vesicle. Its subcellular location is the synaptic vesicle membrane. It localises to the cell membrane. Involved in the targeting and/or fusion of transport vesicles to their target membrane. Major SNARE protein of synaptic vesicles which mediates fusion of synaptic vesicles to release neurotransmitters. Essential for fast vesicular exocytosis and activity-dependent neurotransmitter release as well as fast endocytosis that mediates rapid reuse of synaptic vesicles. Modulates the gating characteristics of the delayed rectifier voltage-dependent potassium channel KCNB1. The polypeptide is Vesicle-associated membrane protein 2 (VAMP2) (Bos taurus (Bovine)).